A 401-amino-acid polypeptide reads, in one-letter code: Probable tRNA sulfurtransferase (401 aa).

In terms of domain architecture, THUMP spans 60–165 (EAVMARLKHV…EDATYLTFRD (106 aa)). Residues 183–184 (MI), 208–209 (HF), R265, G287, and Q296 each bind ATP.

Belongs to the ThiI family.

The protein resides in the cytoplasm. The enzyme catalyses [ThiI sulfur-carrier protein]-S-sulfanyl-L-cysteine + a uridine in tRNA + 2 reduced [2Fe-2S]-[ferredoxin] + ATP + H(+) = [ThiI sulfur-carrier protein]-L-cysteine + a 4-thiouridine in tRNA + 2 oxidized [2Fe-2S]-[ferredoxin] + AMP + diphosphate. It catalyses the reaction [ThiS sulfur-carrier protein]-C-terminal Gly-Gly-AMP + S-sulfanyl-L-cysteinyl-[cysteine desulfurase] + AH2 = [ThiS sulfur-carrier protein]-C-terminal-Gly-aminoethanethioate + L-cysteinyl-[cysteine desulfurase] + A + AMP + 2 H(+). Its pathway is cofactor biosynthesis; thiamine diphosphate biosynthesis. Its function is as follows. Catalyzes the ATP-dependent transfer of a sulfur to tRNA to produce 4-thiouridine in position 8 of tRNAs, which functions as a near-UV photosensor. Also catalyzes the transfer of sulfur to the sulfur carrier protein ThiS, forming ThiS-thiocarboxylate. This is a step in the synthesis of thiazole, in the thiamine biosynthesis pathway. The sulfur is donated as persulfide by IscS. This Bacillus licheniformis (strain ATCC 14580 / DSM 13 / JCM 2505 / CCUG 7422 / NBRC 12200 / NCIMB 9375 / NCTC 10341 / NRRL NRS-1264 / Gibson 46) protein is Probable tRNA sulfurtransferase.